A 601-amino-acid chain; its full sequence is Elongation factor 4 (601 aa).

The region spanning 6–188 (QCIRNFSIIA…AVVAKVPPPQ (183 aa)) is the tr-type G domain. GTP-binding positions include 18–23 (DHGKST) and 135–138 (NKID).

Belongs to the TRAFAC class translation factor GTPase superfamily. Classic translation factor GTPase family. LepA subfamily.

The protein localises to the cell membrane. The catalysed reaction is GTP + H2O = GDP + phosphate + H(+). Functionally, required for accurate and efficient protein synthesis under certain stress conditions. May act as a fidelity factor of the translation reaction, by catalyzing a one-codon backward translocation of tRNAs on improperly translocated ribosomes. Back-translocation proceeds from a post-translocation (POST) complex to a pre-translocation (PRE) complex, thus giving elongation factor G a second chance to translocate the tRNAs correctly. Binds to ribosomes in a GTP-dependent manner. This Desulfitobacterium hafniense (strain DSM 10664 / DCB-2) protein is Elongation factor 4.